Reading from the N-terminus, the 303-residue chain is Eukaryotic translation initiation factor 3 subunit F (303 aa).

Residues 1-10 (MSLDTSSSAI) are compositionally biased toward polar residues. The disordered stretch occupies residues 1 to 25 (MSLDTSSSAIHLQLPPTSSSLRPPS). The segment covering 12 to 25 (LQLPPTSSSLRPPS) has biased composition (low complexity). The MPN domain maps to 27 to 165 (ITVHPSVIAQ…VKGWVSQPLG (139 aa)).

This sequence belongs to the eIF-3 subunit F family. As to quaternary structure, component of the eukaryotic translation initiation factor 3 (eIF-3) complex.

Its subcellular location is the cytoplasm. In terms of biological role, component of the eukaryotic translation initiation factor 3 (eIF-3) complex, which is involved in protein synthesis of a specialized repertoire of mRNAs and, together with other initiation factors, stimulates binding of mRNA and methionyl-tRNAi to the 40S ribosome. The eIF-3 complex specifically targets and initiates translation of a subset of mRNAs involved in cell proliferation. The chain is Eukaryotic translation initiation factor 3 subunit F from Cryptococcus neoformans var. neoformans serotype D (strain B-3501A) (Filobasidiella neoformans).